A 530-amino-acid polypeptide reads, in one-letter code: MAPGKLASAVLLLLLCCAGSGFCGKVLVWPCEMSHWLNLKTLLEELVKRGHEVTVLTLSNNLFIDYNRHPAFNFEVIPVPTDKNMSENILNEFIELAVNVMPTMPLWQSGKLLQQFFVQITEDLGLNCRNTVYNQSLMKKLRDSKYDVLVTDPVIPCGELVAEMLGVPFVNMLKFSMGHTIEKYCGQLPAPPSYVPVPLGGLTTRMTFMERVKNMVFSVLFDFWIQQYDYKFWDQFYSEALGRPTTLCEIMGKAEIWLIRTYWDFEFPRPYLPNFEFVGGLHCKPAKPLPKEMEEFVQSSGEDGVVVFSLGSMVKNLTEEKANLIASALAQIPQKVLWRYKGKKPATLGPNTRLFDWIPQNDLLGHPKTKAFITHGGSNGIYEAIYHGVPMVGMPIFSDQPDNLAGMKAKGAAVEVNMNTMTSADLLGALRTVINDPTYKENAMKLSRIHHDQPVKPLDRAAFWVEFVMHHKGAKHLRVAAHDLSWFQYHSLDVIGFLLACVASAILLVTKCCLFSFQNFIKIGKRIKKE.

A signal peptide spans 1–23; the sequence is MAPGKLASAVLLLLLCCAGSGFC. The Extracellular segment spans residues 24 to 494; that stretch reads GKVLVWPCEM…SWFQYHSLDV (471 aa). The N-linked (GlcNAc...) asparagine glycan is linked to Asn-316. The chain crosses the membrane as a helical span at residues 495-515; it reads IGFLLACVASAILLVTKCCLF. Residues 516–530 are Cytoplasmic-facing; sequence SFQNFIKIGKRIKKE.

It belongs to the UDP-glycosyltransferase family. In terms of tissue distribution, specifically expressed in liver and small intestine.

The protein localises to the membrane. It carries out the reaction glucuronate acceptor + UDP-alpha-D-glucuronate = acceptor beta-D-glucuronoside + UDP + H(+). UDP-glucuronosyltransferases catalyze phase II biotransformation reactions in which lipophilic substrates are conjugated with glucuronic acid to increase water solubility and enhance excretion. They are of major importance in the conjugation and subsequent elimination of potentially toxic xenobiotics and endogenous compounds. The polypeptide is UDP-glucuronosyltransferase 2A3 (UGT2A3) (Cavia porcellus (Guinea pig)).